A 160-amino-acid chain; its full sequence is ATP synthase subunit b 3 (160 aa).

The chain crosses the membrane as a helical span at residues 5 to 25 (PTFWVLVAFVLFVAAVWRIAA).

Belongs to the ATPase B chain family. F-type ATPases have 2 components, F(1) - the catalytic core - and F(0) - the membrane proton channel. F(1) has five subunits: alpha(3), beta(3), gamma(1), delta(1), epsilon(1). F(0) has three main subunits: a(1), b(2) and c(10-14). The alpha and beta chains form an alternating ring which encloses part of the gamma chain. F(1) is attached to F(0) by a central stalk formed by the gamma and epsilon chains, while a peripheral stalk is formed by the delta and b chains.

The protein resides in the cell inner membrane. F(1)F(0) ATP synthase produces ATP from ADP in the presence of a proton or sodium gradient. F-type ATPases consist of two structural domains, F(1) containing the extramembraneous catalytic core and F(0) containing the membrane proton channel, linked together by a central stalk and a peripheral stalk. During catalysis, ATP synthesis in the catalytic domain of F(1) is coupled via a rotary mechanism of the central stalk subunits to proton translocation. In terms of biological role, component of the F(0) channel, it forms part of the peripheral stalk, linking F(1) to F(0). This Rhodospirillum centenum (strain ATCC 51521 / SW) protein is ATP synthase subunit b 3.